Here is a 210-residue protein sequence, read N- to C-terminus: Redox-sensing transcriptional repressor Rex (210 aa).

A DNA-binding region (H-T-H motif) is located at residues 16 to 55 (IYSRFLKRLDKKGITTVSSGDIAEGVGVSPAQVRKDLAYF). 90–95 (GAGNLG) contacts NAD(+).

It belongs to the transcriptional regulatory Rex family. Homodimer.

The protein resides in the cytoplasm. Its function is as follows. Modulates transcription in response to changes in cellular NADH/NAD(+) redox state. The sequence is that of Redox-sensing transcriptional repressor Rex from Desulforamulus reducens (strain ATCC BAA-1160 / DSM 100696 / MI-1) (Desulfotomaculum reducens).